We begin with the raw amino-acid sequence, 349 residues long: Biotin synthase (349 aa).

The 228-residue stretch at 60-287 folds into the Radical SAM core domain; the sequence is GDVELATLLS…KARVRLSAGR (228 aa). Cys-75, Cys-79, and Cys-82 together coordinate [4Fe-4S] cluster. Residues Cys-119, Cys-150, Cys-210, and Arg-282 each coordinate [2Fe-2S] cluster.

It belongs to the radical SAM superfamily. Biotin synthase family. Homodimer. It depends on [4Fe-4S] cluster as a cofactor. The cofactor is [2Fe-2S] cluster.

It catalyses the reaction (4R,5S)-dethiobiotin + (sulfur carrier)-SH + 2 reduced [2Fe-2S]-[ferredoxin] + 2 S-adenosyl-L-methionine = (sulfur carrier)-H + biotin + 2 5'-deoxyadenosine + 2 L-methionine + 2 oxidized [2Fe-2S]-[ferredoxin]. It functions in the pathway cofactor biosynthesis; biotin biosynthesis; biotin from 7,8-diaminononanoate: step 2/2. In terms of biological role, catalyzes the conversion of dethiobiotin (DTB) to biotin by the insertion of a sulfur atom into dethiobiotin via a radical-based mechanism. The protein is Biotin synthase of Albidiferax ferrireducens (strain ATCC BAA-621 / DSM 15236 / T118) (Rhodoferax ferrireducens).